The chain runs to 274 residues: Orotidine 5'-phosphate decarboxylase (274 aa).

The active-site Proton donor is Lys95.

The protein belongs to the OMP decarboxylase family. Type 2 subfamily.

The catalysed reaction is orotidine 5'-phosphate + H(+) = UMP + CO2. It participates in pyrimidine metabolism; UMP biosynthesis via de novo pathway; UMP from orotate: step 2/2. The sequence is that of Orotidine 5'-phosphate decarboxylase from Verminephrobacter eiseniae (strain EF01-2).